Reading from the N-terminus, the 258-residue chain is Indole-3-glycerol phosphate synthase (258 aa).

Belongs to the TrpC family.

It catalyses the reaction 1-(2-carboxyphenylamino)-1-deoxy-D-ribulose 5-phosphate + H(+) = (1S,2R)-1-C-(indol-3-yl)glycerol 3-phosphate + CO2 + H2O. It participates in amino-acid biosynthesis; L-tryptophan biosynthesis; L-tryptophan from chorismate: step 4/5. The sequence is that of Indole-3-glycerol phosphate synthase from Geobacillus thermodenitrificans (strain NG80-2).